We begin with the raw amino-acid sequence, 300 residues long: MPELPEVEIVKQGLNQLTLNKRILGGEVLLERTLAYPISVADFLRGLEGKAIAQWHRQGKYLLAQLYKWGKKNSKLQEYENEDGWLGVHLRMTGQLLWVNPEESLHKHTRVRLFFGHNSSGDKDSSNYELRFVDQRTFGKMWGVPPGKEISKVITGLQQLGLEPFSPEFSPKYLNKKLYKRHRPIKTALLDQTTIAGLGNIYADEALFLSGIRPTTICKDLTEKQIEQLHLAILKVLQTAINAGGTTFSNFLNVKGVNGNYGGVAWVYSRAGQPCRICNTPLEKIKLAGRSTHFCPQCQK.

The active-site Schiff-base intermediate with DNA is the Pro2. Glu3 acts as the Proton donor in catalysis. Lys60 serves as the catalytic Proton donor; for beta-elimination activity. Positions 108, 136, and 181 each coordinate DNA. An FPG-type zinc finger spans residues 266-300 (WVYSRAGQPCRICNTPLEKIKLAGRSTHFCPQCQK). Arg290 serves as the catalytic Proton donor; for delta-elimination activity.

This sequence belongs to the FPG family. In terms of assembly, monomer. It depends on Zn(2+) as a cofactor.

The enzyme catalyses Hydrolysis of DNA containing ring-opened 7-methylguanine residues, releasing 2,6-diamino-4-hydroxy-5-(N-methyl)formamidopyrimidine.. It carries out the reaction 2'-deoxyribonucleotide-(2'-deoxyribose 5'-phosphate)-2'-deoxyribonucleotide-DNA = a 3'-end 2'-deoxyribonucleotide-(2,3-dehydro-2,3-deoxyribose 5'-phosphate)-DNA + a 5'-end 5'-phospho-2'-deoxyribonucleoside-DNA + H(+). In terms of biological role, involved in base excision repair of DNA damaged by oxidation or by mutagenic agents. Acts as a DNA glycosylase that recognizes and removes damaged bases. Has a preference for oxidized purines, such as 7,8-dihydro-8-oxoguanine (8-oxoG). Has AP (apurinic/apyrimidinic) lyase activity and introduces nicks in the DNA strand. Cleaves the DNA backbone by beta-delta elimination to generate a single-strand break at the site of the removed base with both 3'- and 5'-phosphates. The protein is Formamidopyrimidine-DNA glycosylase of Trichodesmium erythraeum (strain IMS101).